The primary structure comprises 156 residues: Small ribosomal subunit protein uS7 (156 aa).

It belongs to the universal ribosomal protein uS7 family. As to quaternary structure, part of the 30S ribosomal subunit. Contacts proteins S9 and S11.

One of the primary rRNA binding proteins, it binds directly to 16S rRNA where it nucleates assembly of the head domain of the 30S subunit. Is located at the subunit interface close to the decoding center, probably blocks exit of the E-site tRNA. This chain is Small ribosomal subunit protein uS7, found in Nitratidesulfovibrio vulgaris (strain ATCC 29579 / DSM 644 / CCUG 34227 / NCIMB 8303 / VKM B-1760 / Hildenborough) (Desulfovibrio vulgaris).